Reading from the N-terminus, the 79-residue chain is D-alanyl carrier protein (79 aa).

The region spanning 1–76 is the Carrier domain; the sequence is MEEQVLSLLE…RVMAYVKKRV (76 aa). O-(pantetheine 4'-phosphoryl)serine is present on S34.

This sequence belongs to the DltC family. In terms of processing, 4'-phosphopantetheine is transferred from CoA to a specific serine of apo-DCP.

The protein localises to the cytoplasm. The protein operates within cell wall biogenesis; lipoteichoic acid biosynthesis. Carrier protein involved in the D-alanylation of lipoteichoic acid (LTA). The loading of thioester-linked D-alanine onto DltC is catalyzed by D-alanine--D-alanyl carrier protein ligase DltA. The DltC-carried D-alanyl group is further transferred to cell membrane phosphatidylglycerol (PG) by forming an ester bond, probably catalyzed by DltD. D-alanylation of LTA plays an important role in modulating the properties of the cell wall in Gram-positive bacteria, influencing the net charge of the cell wall. The polypeptide is D-alanyl carrier protein (Abiotrophia defectiva (Streptococcus defectivus)).